We begin with the raw amino-acid sequence, 974 residues long: Receptor-like protein 7 (974 aa).

An N-terminal signal peptide occupies residues 1–24 (MSFLIRSICFLILIPSFLITFVSA). Topologically, residues 25–930 (TQHLCHSDQK…EEEEEESFSW (906 aa)) are extracellular. Asn-54 and Asn-90 each carry an N-linked (GlcNAc...) asparagine glycan. LRR repeat units follow at residues 96–120 (LRHLRDLNLANNNFNNSPIPAEFDK), 122–145 (TGLERLDLSQSSLSGQIPINLLQL), 147–166 (KLVSLDLSSSDFFGDESFHY), 181–204 (LRNLRELDMSYVKISSEIPEEFSN), 206–229 (RSLRSLNLNGCNLFGEFPSSILLI), and 230–252 (PNLQSIDLGNNPNLRGNLPVFHE). Asn-253 carries an N-linked (GlcNAc...) asparagine glycan. LRR repeat units follow at residues 254 to 277 (NSLLKLTILYTSFSGAIPDSISSL), 278 to 301 (KNLTSLTLSVSYFSGKIPFSLGNL), 302 to 325 (SHLSHLSLSSNNLIGEIPSSIGNL), 327 to 349 (QLTNFYVGGNKLSGNLPATLSNL), and 350 to 373 (TKLNTISLSSNQFTGSLPPSISQL). N-linked (GlcNAc...) asparagine glycans are attached at residues Asn-279 and Asn-300. A glycan (N-linked (GlcNAc...) asparagine) is linked at Asn-348. Residues 374-396 (SKLKFFFADDNPFIGAILSPLLK) form an LRR 12; degenerate repeat. LRR repeat units follow at residues 397–422 (IPSLTRIHLSYNQLNDLVGIENIFML), 425–448 (LETFYIYHYNYTKVRPLDLNVFSS), 454–472 (TLYISRIPISTTNITSDFP), 473–495 (SNLEYLSLRSCNITDFPEFIRKG), 496–519 (RNLQILDLSNNKIKGQVPDWLWRM), 521–542 (TLNSVDLSNNSLSGFHVSVKAS), 544–570 (ESQLTSVDLSSNAFQGPLFLPSKSLRY), 572–589 (SGSNNNFTGKIPRSICGL), 590–616 (SSLEILDLSNNNLNGSLPWCLETLMSS), 618–638 (SDLDLRNNSLSGSLPEIFMNA), 639–662 (TKLRSLDVSHNRMEGKLPGSLTGC), 664–685 (SLEVLNVGSNRINDMFPFELNS), 687–712 (QKLQVLVLHSNKFHGTLHNVDGVWFG), 713–737 (FPQLQIIDVSHNDFFGILPSDYFMN), 785–809 (LTIYTAIDLSGNQLHGKIPDSIGLL), 810–833 (KELRILNMSSNGFTGHIPSSLANL), 834–857 (KNLESLDISQNNISGEIPPELGTL), and 859–882 (SLAWINVSHNQLVGSIPQGTQFQR). N-linked (GlcNAc...) asparagine glycosylation is found at Asn-434, Asn-466, and Asn-484. Asn-529 carries N-linked (GlcNAc...) asparagine glycosylation. 4 N-linked (GlcNAc...) asparagine glycosylation sites follow: Asn-577, Asn-603, Asn-624, and Asn-637. The N-linked (GlcNAc...) asparagine glycan is linked to Asn-737. N-linked (GlcNAc...) asparagine glycosylation is found at Asn-816, Asn-845, and Asn-864. Positions 899-923 (LENVCGHIKESTPTQTEPLETKEEE) are disordered. Residues 931–951 (IAAGLGFAPGVVFGLAMGYIV) traverse the membrane as a helical segment. Residues 952–974 (VSYKHQWFMKTFGRSKQQNTRTR) lie on the Cytoplasmic side of the membrane.

The protein belongs to the RLP family.

It is found in the cell membrane. The protein is Receptor-like protein 7 of Arabidopsis thaliana (Mouse-ear cress).